The following is a 552-amino-acid chain: Probable protein kinase UbiB (552 aa).

In terms of domain architecture, Protein kinase spans 121–504; it reads HFDTVPLASA…QGLQRRVVNA (384 aa). ATP contacts are provided by residues 127 to 135 and lysine 149; that span reads LASASISQV. Residue aspartate 284 is the Proton acceptor of the active site. Transmembrane regions (helical) follow at residues 501–521 and 530–550; these read VVNA…YGLH and IPVW…SAWW.

Belongs to the ABC1 family. UbiB subfamily.

It localises to the cell inner membrane. The protein operates within cofactor biosynthesis; ubiquinone biosynthesis [regulation]. In terms of biological role, is probably a protein kinase regulator of UbiI activity which is involved in aerobic coenzyme Q (ubiquinone) biosynthesis. The sequence is that of Probable protein kinase UbiB from Xylella fastidiosa (strain M23).